A 209-amino-acid chain; its full sequence is Transmembrane domain-containing protein TMIGD3 (209 aa).

Residues methionine 1–alanine 15 form the signal peptide. Residues serine 152–leucine 172 traverse the membrane as a helical segment. A disordered region spans residues glutamine 179 to methionine 201. The segment covering lysine 187–methionine 201 has biased composition (polar residues).

The protein resides in the membrane. This Mus musculus (Mouse) protein is Transmembrane domain-containing protein TMIGD3 (Tmigd3).